Reading from the N-terminus, the 209-residue chain is Response regulator protein VraR (209 aa).

The 117-residue stretch at 4–120 folds into the Response regulatory domain; that stretch reads KVLFVDDHEM…DIAEAIRKTY (117 aa). Asp55 carries the 4-aspartylphosphate modification. The HTH luxR-type domain maps to 141–206; that stretch reads RAELYEMLTE…QAVIYAFQHN (66 aa). The H-T-H motif DNA-binding region spans 165–184; that stretch reads NQEIASASHITIKTVKTHVS.

Post-translationally, phosphorylated by VraS.

It localises to the cytoplasm. In terms of biological role, member of the two-component regulatory system VraS/VraR involved in the control of the cell wall peptidoglycan biosynthesis. The chain is Response regulator protein VraR (vraR) from Staphylococcus saprophyticus subsp. saprophyticus (strain ATCC 15305 / DSM 20229 / NCIMB 8711 / NCTC 7292 / S-41).